The chain runs to 284 residues: Nucleotide-binding protein NMCC_0698 (284 aa).

Residue 8 to 15 (GLSGSGKS) coordinates ATP. 58 to 61 (DVRS) contributes to the GTP binding site.

The protein belongs to the RapZ-like family.

In terms of biological role, displays ATPase and GTPase activities. This Neisseria meningitidis serogroup C (strain 053442) protein is Nucleotide-binding protein NMCC_0698.